The sequence spans 551 residues: Gliomedin (551 aa).

Residues 1–17 (MARGAEGGRGDAGWGLR) are Cytoplasmic-facing. The chain crosses the membrane as a helical; Signal-anchor for type II membrane protein span at residues 18–39 (GALAAVALLSALNAAGTVFALC). The Extracellular portion of the chain corresponds to 40-551 (QWRGLSSALR…VQFLSTTLNQ (512 aa)). The interval 72–107 (LSRAPRGASAPPQDPASSARNKRSHSGEPAPHIRAE) is disordered. Over residues 79-90 (ASAPPQDPASSA) the composition is skewed to low complexity. Asn130 carries an N-linked (GlcNAc...) asparagine glycan. Collagen-like domains are found at residues 137 to 195 (LTGP…RGEK) and 196 to 222 (GDHGELGLQGNEGPPGQKGEKGDKGDV). Residues 139 to 282 (GPSGPPGPPG…GETCAIPNDD (144 aa)) are disordered. Basic and acidic residues-rich tracts occupy residues 191 to 200 (ERGEKGDHGE) and 213 to 222 (KGEKGDKGDV). A compositionally biased stretch (pro residues) spans 237-253 (PPGPPGPPGPPGPPGPP). In terms of domain architecture, Olfactomedin-like spans 299-546 (QAESMITSIG…LMLYPVQFLS (248 aa)). N-linked (GlcNAc...) asparagine glycosylation is found at Asn329, Asn357, Asn378, and Asn464.

In terms of assembly, homotrimer (via collagen-like domains). Interacts with NRCAM and NFASC/neurofascin. Interaction with glial NRCAM enhances interaction with axonal NFASC. Interacts with MYOC. N-glycosylated. In terms of processing, proteolytic processing by a furin-like protease causes shedding of the ectodomain. Further cleavage by BMP1 releases the olfactomedin-like domain. In terms of tissue distribution, specifically expressed in spinal cord, brain, placenta and sciatic nerve. More abundant in peripheral than central nervous system.

The protein resides in the cell membrane. It is found in the cell projection. The protein localises to the axon. It localises to the secreted. Its subcellular location is the extracellular space. The protein resides in the extracellular matrix. Its function is as follows. Ligand for NRCAM and NFASC/neurofascin that plays a role in the formation and maintenance of the nodes of Ranvier on myelinated axons. Mediates interaction between Schwann cell microvilli and axons via its interactions with NRCAM and NFASC. Nodes of Ranvier contain clustered sodium channels that are crucial for the saltatory propagation of action potentials along myelinated axons. During development, nodes of Ranvier are formed by the fusion of two heminodes. Required for normal clustering of sodium channels at heminodes; not required for the formation of mature nodes with normal sodium channel clusters. Required, together with NRCAM, for maintaining NFASC and sodium channel clusters at mature nodes of Ranvier. The polypeptide is Gliomedin (GLDN) (Homo sapiens (Human)).